The primary structure comprises 324 residues: Archaeosine synthase subunit beta (324 aa).

One can recognise a Radical SAM core domain in the interval 12 to 254 (GKPGTALFII…LIWAKRKFPN (243 aa)). Positions 27, 36, and 39 each coordinate [4Fe-4S] cluster.

The protein belongs to the radical SAM superfamily. RaSEA family. Forms a robust complex with the archaeosine synthase alpha subunit ArcS, likely an alpha(2)beta(2) heterotetrameric structure. [4Fe-4S] cluster serves as cofactor.

The enzyme catalyses 7-N-[(5S)-5-amino-5-carboxypentyl]formamidino-7-deazaguanosine(15) in tRNA + S-adenosyl-L-methionine = archaeosine(15) in tRNA + L-1-piperideine-6-carboxylate + 5'-deoxyadenosine + L-methionine + 2 H(+). Its pathway is tRNA modification; archaeosine-tRNA biosynthesis. In terms of biological role, radical SAM enzyme involved in the synthesis of archaeosine, a modified nucleoside present in the dihydrouridine loop (D-loop) of archaeal tRNAs. Catalyzes the cleavage of the C(epsilon)-N bond of the lysine moiety of q0kN15-tRNA, leading to the formation of archaeosine at position 15 in tRNAs. In Thermococcus kodakarensis (strain ATCC BAA-918 / JCM 12380 / KOD1) (Pyrococcus kodakaraensis (strain KOD1)), this protein is Archaeosine synthase subunit beta.